The chain runs to 405 residues: Tryptophan synthase beta chain (405 aa).

Position 95 is an N6-(pyridoxal phosphate)lysine (lysine 95).

This sequence belongs to the TrpB family. In terms of assembly, tetramer of two alpha and two beta chains. Pyridoxal 5'-phosphate serves as cofactor.

It catalyses the reaction (1S,2R)-1-C-(indol-3-yl)glycerol 3-phosphate + L-serine = D-glyceraldehyde 3-phosphate + L-tryptophan + H2O. The protein operates within amino-acid biosynthesis; L-tryptophan biosynthesis; L-tryptophan from chorismate: step 5/5. Its function is as follows. The beta subunit is responsible for the synthesis of L-tryptophan from indole and L-serine. The chain is Tryptophan synthase beta chain (trpB) from Pseudomonas putida (Arthrobacter siderocapsulatus).